Here is a 364-residue protein sequence, read N- to C-terminus: Long-wave-sensitive opsin 1 (364 aa).

At 1 to 52 (MAHTWGPQRLAGGQPQANFEESTQGSIFTYTNSNSTRDPFEGPNYHIAPRWV) the chain is on the extracellular side. A glycan (O-linked (GlcNAc) serine) is linked at serine 22. An N-linked (GlcNAc...) asparagine glycan is attached at asparagine 34. Residues 53–77 (YHLTSAWMVFVVIASVFTNGLVLAA) traverse the membrane as a helical segment. The Cytoplasmic segment spans residues 78–89 (TMRFKKLRHPLN). The helical transmembrane segment at 90–115 (WILVNLAIADLAETIIASTISVVNQM) threads the bilayer. At 116–129 (YGYFVLGHPLCVVE) the chain is on the extracellular side. A disulfide bridge links cysteine 126 with cysteine 203. The helical transmembrane segment at 130 to 149 (GYTVSLCGITGLWSLAIISW) threads the bilayer. At 150–168 (ERWMVVCKPFGNVRFDAKL) the chain is on the cytoplasmic side. The chain crosses the membrane as a helical span at residues 169-192 (ATAGIAFSWIWAAVWTAPPIFGWS). The Extracellular segment spans residues 193–218 (RYWPHGLKTSCGPDVFSGSSYPGVQS). Residues 219–246 (YMIVLMITCCFIPLSVIILCYLQVWLAI) form a helical membrane-spanning segment. Topologically, residues 247 to 268 (RAVAKQQKESESTQKAEKEVTR) are cytoplasmic. A helical membrane pass occupies residues 269-292 (MVMVMIFAYCLCWGPYTFFACFAA). The Extracellular portion of the chain corresponds to 293–300 (AHPGYAFH). A helical membrane pass occupies residues 301-325 (PLVAALPAYFAKSATIYNPIIYVFM). The residue at position 312 (lysine 312) is an N6-(retinylidene)lysine. The Cytoplasmic segment spans residues 326–364 (NRQFRNCILQLFGKKVDDSSELSSVSKTEASSVSSVSPA).

It belongs to the G-protein coupled receptor 1 family. Opsin subfamily. In terms of processing, phosphorylated on some or all of the serine and threonine residues present in the C-terminal region. The three color pigments are found in the cone photoreceptor cells.

The protein resides in the membrane. Its function is as follows. Visual pigments are the light-absorbing molecules that mediate vision. They consist of an apoprotein, opsin, covalently linked to cis-retinal. The polypeptide is Long-wave-sensitive opsin 1 (OPN1LW) (Capra hircus (Goat)).